A 403-amino-acid chain; its full sequence is Argininosuccinate synthase (403 aa).

Residues 13–21 (AYSGGLDTS) and Ala-40 each bind ATP. Residues Tyr-92 and Ser-97 each coordinate L-citrulline. Residue Gly-122 participates in ATP binding. The L-aspartate site is built by Thr-124, Asn-128, and Asp-129. Position 128 (Asn-128) interacts with L-citrulline. Positions 132, 181, 190, 266, and 278 each coordinate L-citrulline.

This sequence belongs to the argininosuccinate synthase family. Type 1 subfamily. Homotetramer.

The protein localises to the cytoplasm. It carries out the reaction L-citrulline + L-aspartate + ATP = 2-(N(omega)-L-arginino)succinate + AMP + diphosphate + H(+). It participates in amino-acid biosynthesis; L-arginine biosynthesis; L-arginine from L-ornithine and carbamoyl phosphate: step 2/3. This is Argininosuccinate synthase from Aliivibrio salmonicida (strain LFI1238) (Vibrio salmonicida (strain LFI1238)).